The primary structure comprises 100 residues: Urease subunit gamma (100 aa).

This sequence belongs to the urease gamma subunit family. In terms of assembly, heterotrimer of UreA (gamma), UreB (beta) and UreC (alpha) subunits. Three heterotrimers associate to form the active enzyme.

Its subcellular location is the cytoplasm. The catalysed reaction is urea + 2 H2O + H(+) = hydrogencarbonate + 2 NH4(+). It functions in the pathway nitrogen metabolism; urea degradation; CO(2) and NH(3) from urea (urease route): step 1/1. This chain is Urease subunit gamma, found in Ectopseudomonas mendocina (strain ymp) (Pseudomonas mendocina).